The following is a 119-amino-acid chain: Large ribosomal subunit protein uL24 (119 aa).

It belongs to the universal ribosomal protein uL24 family. As to quaternary structure, part of the 50S ribosomal subunit.

Functionally, one of two assembly initiator proteins, it binds directly to the 5'-end of the 23S rRNA, where it nucleates assembly of the 50S subunit. One of the proteins that surrounds the polypeptide exit tunnel on the outside of the subunit. This Arthrobacter sp. (strain FB24) protein is Large ribosomal subunit protein uL24.